Consider the following 348-residue polypeptide: Dihydroorotase (348 aa).

Zn(2+) contacts are provided by His-17 and His-19. Substrate-binding positions include 19–21 (HLR) and Asn-45. Residues Lys-103, His-140, and His-178 each contribute to the Zn(2+) site. Lys-103 is subject to N6-carboxylysine. Residue His-140 coordinates substrate. Leu-223 provides a ligand contact to substrate. Asp-251 lines the Zn(2+) pocket. The active site involves Asp-251. 2 residues coordinate substrate: His-255 and Ala-267.

The protein belongs to the metallo-dependent hydrolases superfamily. DHOase family. Class II DHOase subfamily. In terms of assembly, homodimer. Requires Zn(2+) as cofactor.

The enzyme catalyses (S)-dihydroorotate + H2O = N-carbamoyl-L-aspartate + H(+). It functions in the pathway pyrimidine metabolism; UMP biosynthesis via de novo pathway; (S)-dihydroorotate from bicarbonate: step 3/3. Its function is as follows. Catalyzes the reversible cyclization of carbamoyl aspartate to dihydroorotate. This Escherichia coli O157:H7 protein is Dihydroorotase.